The primary structure comprises 1020 residues: Phosphatidylinositol 3-kinase VPS34 (1020 aa).

Residues L49 to K210 enclose the C2 PI3K-type domain. The 247-residue stretch at D331–I577 folds into the PIK helical domain. One can recognise a PI3K/PI4K catalytic domain in the interval Y666–L1004. A G-loop region spans residues V672–A678. The interval G873–N881 is catalytic loop. Positions H892–P913 are activation loop.

It belongs to the PI3/PI4-kinase family. Component of the autophagy-specific VPS34 PI3-kinase complex I composed of at least VPS15, VPS30, VPS34, and of the VPS34 PI3-kinase complex II composed of VPS15, VPS30, VPS34 and VPS38. Interacts with VMNA7. In terms of processing, autophosphorylated.

The protein localises to the golgi apparatus. The protein resides in the trans-Golgi network membrane. It localises to the endosome membrane. The catalysed reaction is a 1,2-diacyl-sn-glycero-3-phospho-(1D-myo-inositol) + ATP = a 1,2-diacyl-sn-glycero-3-phospho-(1D-myo-inositol-3-phosphate) + ADP + H(+). Multifunctional phosphatidylinositol 3-kinase involved in acidification of vacuoles, pH-dependent cell growth, and autophagocytosis. Plays an important role in protein transport and virulence. Component of the autophagy-specific VPS34 PI3-kinase complex I essential to recruit the ATG8-phosphatidylinositol conjugate and the ATG12-ATG5 conjugate to the pre-autophagosomal structure. Also involved in endosome-to-Golgi retrograde transport as part of the VPS34 PI3-kinase complex II. This second complex is required for the endosome-to-Golgi retrieval of PEP1 and KEX2, and the recruitment of VPS5 and VPS7, two components of the retromer complex, to endosomal membranes (probably through the synthesis of a specific pool of phosphatidylinositol 3-phosphate recruiting the retromer to the endosomes). Finally, it might also be involved in ethanol tolerance and cell wall integrity. This is Phosphatidylinositol 3-kinase VPS34 from Candida albicans (strain SC5314 / ATCC MYA-2876) (Yeast).